Here is a 478-residue protein sequence, read N- to C-terminus: PRAME family member 15 (478 aa).

The stretch at 99–126 is one LRR 1; degenerate repeat; that stretch reads RWKLQVLDLQDVCENFWMVWSEAMAHGC. The stretch at 181–205 is one LRR 2; degenerate repeat; the sequence is HLCCKKLKILGMPFRNIRSILKMVN. The stretch at 206 to 232 is one LRR 3; degenerate repeat; that stretch reads LDCIQEVEVNCKWVLPILTQFTPYLGH. Residues 233 to 268 form an LRR 4; degenerate repeat; sequence MRNLQKLVLSHMDVSRYVSPEQKKEIVTQFTTQFLK. LRR repeat units follow at residues 269-294, 295-326, 327-347, 351-378, and 379-403; these read LRCL…LSCL, KTSL…SQLK, TLDL…QILL, AATL…ALSR, and CFEL…LLSH.

The protein belongs to the PRAME family.

The chain is PRAME family member 15 from Homo sapiens (Human).